Reading from the N-terminus, the 459-residue chain is tRNA modification GTPase MnmE (459 aa).

Residues R30, E93, and K132 each coordinate (6S)-5-formyl-5,6,7,8-tetrahydrofolate. The region spanning 226-381 (GVTMAIVGKP…LEEKILESVK (156 aa)) is the TrmE-type G domain. K(+) is bound at residue N236. Residues 236–241 (NVGKST), 255–261 (TDIPGTT), and 280–283 (DTAG) each bind GTP. S240 contacts Mg(2+). The K(+) site is built by T255, I257, and T260. T261 serves as a coordination point for Mg(2+). K459 serves as a coordination point for (6S)-5-formyl-5,6,7,8-tetrahydrofolate.

This sequence belongs to the TRAFAC class TrmE-Era-EngA-EngB-Septin-like GTPase superfamily. TrmE GTPase family. As to quaternary structure, homodimer. Heterotetramer of two MnmE and two MnmG subunits. The cofactor is K(+).

It localises to the cytoplasm. Exhibits a very high intrinsic GTPase hydrolysis rate. Involved in the addition of a carboxymethylaminomethyl (cmnm) group at the wobble position (U34) of certain tRNAs, forming tRNA-cmnm(5)s(2)U34. In Fervidobacterium nodosum (strain ATCC 35602 / DSM 5306 / Rt17-B1), this protein is tRNA modification GTPase MnmE.